The sequence spans 72 residues: Delta-actitoxin-Avd2b 3 (72 aa).

The signal sequence occupies residues 1-21; the sequence is MMSRLLVFLMLGAAFMLVVSA. The propeptide occupies 22–42; sequence NDAYGDEPAFKDLNQGDESLG. Disulfide bonds link C47–C62, C48–C56, and C50–C67.

The protein belongs to the sea anemone short toxin (type III) family.

The protein resides in the secreted. Its subcellular location is the nematocyst. Voltage-gated sodium channel (Nav) inhibitor. 1 uM completely inhibits insect voltage-gated sodium channel inactivation (DmNav1 from D.melanogaster). The chain is Delta-actitoxin-Avd2b 3 from Anemonia viridis (Snakelocks anemone).